A 163-amino-acid chain; its full sequence is uncharacterized protein (163 aa).

Residues 142–163 are disordered; the sequence is PQIVISEHNNTKETSPSRQFEH. The segment covering 153-163 has biased composition (polar residues); it reads KETSPSRQFEH.

Belongs to the RCAN family.

Inhibits calcineurin-dependent transcriptional responses by binding to the catalytic domain of calcineurin. This is an uncharacterized protein from Schizosaccharomyces pombe (strain 972 / ATCC 24843) (Fission yeast).